Reading from the N-terminus, the 151-residue chain is Ribosome maturation factor RimP (151 aa).

Belongs to the RimP family.

It is found in the cytoplasm. Its function is as follows. Required for maturation of 30S ribosomal subunits. In Vibrio cholerae serotype O1 (strain ATCC 39541 / Classical Ogawa 395 / O395), this protein is Ribosome maturation factor RimP.